The following is a 277-amino-acid chain: tRNA uridine(34) hydroxylase (277 aa).

Residues Ser-126–Ser-221 enclose the Rhodanese domain. The active-site Cysteine persulfide intermediate is the Cys-181.

It belongs to the TrhO family.

The catalysed reaction is uridine(34) in tRNA + AH2 + O2 = 5-hydroxyuridine(34) in tRNA + A + H2O. Its function is as follows. Catalyzes oxygen-dependent 5-hydroxyuridine (ho5U) modification at position 34 in tRNAs. The polypeptide is tRNA uridine(34) hydroxylase (Anaplasma marginale (strain Florida)).